Here is a 330-residue protein sequence, read N- to C-terminus: Olfactory receptor 1P1 (330 aa).

The Extracellular segment spans residues 1-39 (MGLTQDFFPPTSELLEGGNQTSTFEFLLWGLSDQPQQQH). Asn-19 is a glycosylation site (N-linked (GlcNAc...) asparagine). A helical membrane pass occupies residues 40-60 (IFFLLFLWMYVVTVAGNLLIV). At 61–71 (LAIGTDTHLHT) the chain is on the cytoplasmic side. The helical transmembrane segment at 72 to 92 (PMYFFLASLSCADIFSTSTTV) threads the bilayer. The Extracellular segment spans residues 93–111 (PKALVNIQTQSRSISYAGC). Cys-111 and Cys-192 form a disulfide bridge. Residues 112–132 (LAQLYFFLTFGDMDIFLPATM) form a helical membrane-spanning segment. At 133–137 (AYDRY) the chain is on the cytoplasmic side. A helical transmembrane segment spans residues 138–158 (VAICHLLHYMMIMSLHRCAFL). The Extracellular segment spans residues 159–209 (VTACWTLTSLLAMTRTFLIFRLSLCSKILPGFFCDLGPLMKVSCSDAQVNE). Residues 210-230 (LVLLFLGGAVILIPFMLILVS) form a helical membrane-spanning segment. Topologically, residues 231–257 (YIRIVSAILRAPSAQGRRKAFSTCDSH) are cytoplasmic. The helical transmembrane segment at 258-278 (LVVVALFFGTVIRAYLCPSSS) threads the bilayer. The Extracellular segment spans residues 279 to 286 (SSNSVKED). The helical transmembrane segment at 287–307 (TAAAVMYTVVTPLLNPFIYSM) threads the bilayer. The Cytoplasmic segment spans residues 308-330 (RNKDMKAAVVRLLKGRVSFSQGQ).

It belongs to the G-protein coupled receptor 1 family.

The protein resides in the cell membrane. In terms of biological role, odorant receptor. The polypeptide is Olfactory receptor 1P1 (OR1P1) (Homo sapiens (Human)).